The following is a 628-amino-acid chain: Kinesin-like protein KIN-10B (628 aa).

One can recognise a Kinesin motor domain in the interval 20–340 (NVRVVLRVRP…VSLAARSRHI (321 aa)). Position 114–121 (114–121 (GATGSGKT)) interacts with ATP. A disordered region spans residues 496–519 (SPIDSNAKPNSAHGSSPFLKPMTP). Residues 498 to 509 (IDSNAKPNSAHG) are compositionally biased toward polar residues.

Belongs to the TRAFAC class myosin-kinesin ATPase superfamily. Kinesin family. KIN-10 subfamily.

In Arabidopsis thaliana (Mouse-ear cress), this protein is Kinesin-like protein KIN-10B.